Reading from the N-terminus, the 134-residue chain is MPPKARSGARRTGRRVVKKNVAQGHAYIKSTFNNTIVSITDPNGAVISWASSGHVGFKGSRKSTPFAAQMAAENAARKAMDHGMKKVDVFVKGPGSGRETAIRSLQAAGLEVSSISDVTPQPHNGCRPPKRRRV.

Residues 114 to 134 (SISDVTPQPHNGCRPPKRRRV) are disordered.

This sequence belongs to the universal ribosomal protein uS11 family. As to quaternary structure, part of the 30S ribosomal subunit. Interacts with proteins S7 and S18. Binds to IF-3.

Located on the platform of the 30S subunit, it bridges several disparate RNA helices of the 16S rRNA. Forms part of the Shine-Dalgarno cleft in the 70S ribosome. This Corynebacterium efficiens (strain DSM 44549 / YS-314 / AJ 12310 / JCM 11189 / NBRC 100395) protein is Small ribosomal subunit protein uS11.